Consider the following 188-residue polypeptide: Elongation factor P (188 aa).

Belongs to the elongation factor P family.

The protein resides in the cytoplasm. The protein operates within protein biosynthesis; polypeptide chain elongation. Involved in peptide bond synthesis. Stimulates efficient translation and peptide-bond synthesis on native or reconstituted 70S ribosomes in vitro. Probably functions indirectly by altering the affinity of the ribosome for aminoacyl-tRNA, thus increasing their reactivity as acceptors for peptidyl transferase. The chain is Elongation factor P from Pseudomonas aeruginosa (strain LESB58).